A 344-amino-acid chain; its full sequence is MDTEMMPKFSSKDEEIDYWKCLSLKYKKSCHDAQEELQEFQEGSRELEAELEAQLGQAEHRIRDLQSENQRLKSEVDILKEKLEQQYAQSYKQISMLEDDLLQTRGIKEQLHKYVRELEQANDDLERAKRATITSLEDFEQRLNQAIERNAFLESELDEKESLLVSVQRLKDEARDLRQELAVRERTSDVTRMSAPSSPTLDIDKTDSAVQASLSLPATPVGKTMEHPFIGTKALTNGCGNGSPLTPSARISALNIVGDLLRKVGALESKLAACRNFAKDQAARKNYTTGNGNLINSNATKFSHSLHTTYFDKTTMNGLDPGALSAAIASPRAVSPPGLLPLSV.

Residues 26-189 (YKKSCHDAQE…ELAVRERTSD (164 aa)) adopt a coiled-coil conformation.

It belongs to the nudE family. Phosphorylated in mitosis.

Its subcellular location is the cytoplasm. It is found in the cytoskeleton. It localises to the microtubule organizing center. The protein localises to the centrosome. The protein resides in the spindle. Required for organization of the cellular microtubule array and microtubule anchoring at the centrosome. Positively regulates the activity of the minus-end directed microtubule motor protein dynein. May enhance dynein-mediated microtubule sliding by targeting dynein to the microtubule plus end. The chain is Nuclear distribution protein nudE-like 1-B (ndel1b) from Danio rerio (Zebrafish).